The primary structure comprises 201 residues: Small ribosomal subunit protein uS4 (201 aa).

Positions 91 to 157 (CRLDNVVYRA…TPFIIAKETI (67 aa)) constitute an S4 RNA-binding domain.

The protein belongs to the universal ribosomal protein uS4 family. Part of the 30S ribosomal subunit. Contacts protein S5. The interaction surface between S4 and S5 is involved in control of translational fidelity.

Functionally, one of the primary rRNA binding proteins, it binds directly to 16S rRNA where it nucleates assembly of the body of the 30S subunit. Its function is as follows. With S5 and S12 plays an important role in translational accuracy. The sequence is that of Small ribosomal subunit protein uS4 from Saccharopolyspora erythraea (strain ATCC 11635 / DSM 40517 / JCM 4748 / NBRC 13426 / NCIMB 8594 / NRRL 2338).